The following is a 107-amino-acid chain: Glutaredoxin 4 (107 aa).

The Glutaredoxin domain maps to 4-106; it reads IDKIKQQINE…TLLKETATKH (103 aa). Lys-21 contributes to the glutathione binding site. Cys-29 provides a ligand contact to [2Fe-2S] cluster. Glutathione contacts are provided by residues Arg-58, Phe-70, and 83-84; that span reads CD.

It belongs to the glutaredoxin family. Monothiol subfamily. Homodimer.

The protein resides in the cytoplasm. Monothiol glutaredoxin involved in the biogenesis of iron-sulfur clusters. This Haemophilus ducreyi (strain 35000HP / ATCC 700724) protein is Glutaredoxin 4 (grxD).